A 226-amino-acid polypeptide reads, in one-letter code: MNHIVTKKIQKVLGYTFTHKDLLKQALTHRSASSKHNERLEFLGDSILSFVIANALYQHFPYIDEGDMSRMRATLVRGNTLAEIAYEFDLGEYLKLGQGELKSGGFRRESILANTVEALIGSIYLDSNIKTVEELILKWYEKRLEKISPGDTQKDPKTRLQEYLQSKHLSLPLYFIVEVYGEAHNQLFTIHCKISTISEYLIGTGSSRRKAEQDAAQKALIKLGVE.

The 123-residue stretch at 6–128 (TKKIQKVLGY…LIGSIYLDSN (123 aa)) folds into the RNase III domain. E41 is a Mg(2+) binding site. D45 is an active-site residue. The Mg(2+) site is built by N114 and E117. Residue E117 is part of the active site. The region spanning 155–225 (DPKTRLQEYL…AQKALIKLGV (71 aa)) is the DRBM domain.

The protein belongs to the ribonuclease III family. As to quaternary structure, homodimer. Mg(2+) is required as a cofactor.

It is found in the cytoplasm. It carries out the reaction Endonucleolytic cleavage to 5'-phosphomonoester.. Functionally, digests double-stranded RNA. Involved in the processing of primary rRNA transcript to yield the immediate precursors to the large and small rRNAs (23S and 16S). Processes some mRNAs, and tRNAs when they are encoded in the rRNA operon. Processes pre-crRNA and tracrRNA of type II CRISPR loci if present in the organism. The polypeptide is Ribonuclease 3 (Buchnera aphidicola subsp. Acyrthosiphon pisum (strain 5A)).